Consider the following 237-residue polypeptide: Demethylmenaquinone methyltransferase (237 aa).

S-adenosyl-L-methionine-binding positions include T62, D80, 102–103 (DA), and S119.

It belongs to the class I-like SAM-binding methyltransferase superfamily. MenG/UbiE family.

It carries out the reaction a 2-demethylmenaquinol + S-adenosyl-L-methionine = a menaquinol + S-adenosyl-L-homocysteine + H(+). It participates in quinol/quinone metabolism; menaquinone biosynthesis; menaquinol from 1,4-dihydroxy-2-naphthoate: step 2/2. Methyltransferase required for the conversion of demethylmenaquinol (DMKH2) to menaquinol (MKH2). This chain is Demethylmenaquinone methyltransferase, found in Renibacterium salmoninarum (strain ATCC 33209 / DSM 20767 / JCM 11484 / NBRC 15589 / NCIMB 2235).